A 251-amino-acid chain; its full sequence is MSDSNLDGVLVLIPARMASTRLPGKPLADICGLPMIVQVAMRAQEAAIGRVVVAVDDIRVFDAVSAAGFEVVMTSSDHQSGSDRIFEALQKVDPAGKAEFIVNVQGDLPTIDPETVRAALRPLENEAVDIGTLTTEIDNEEDKTAPHIVKVVGSPVSDTRLRGLYFTRATAPYGKGPLYHHIGLYAYRRAALERFVSLGPSTLERREALEQLRALEAGMRIDAEIVDTVPLGVDTPADLEKARRILSARTG.

It belongs to the KdsB family.

It localises to the cytoplasm. The catalysed reaction is 3-deoxy-alpha-D-manno-oct-2-ulosonate + CTP = CMP-3-deoxy-beta-D-manno-octulosonate + diphosphate. The protein operates within nucleotide-sugar biosynthesis; CMP-3-deoxy-D-manno-octulosonate biosynthesis; CMP-3-deoxy-D-manno-octulosonate from 3-deoxy-D-manno-octulosonate and CTP: step 1/1. It participates in bacterial outer membrane biogenesis; lipopolysaccharide biosynthesis. In terms of biological role, activates KDO (a required 8-carbon sugar) for incorporation into bacterial lipopolysaccharide in Gram-negative bacteria. The sequence is that of 3-deoxy-manno-octulosonate cytidylyltransferase from Rhizobium leguminosarum bv. trifolii (strain WSM2304).